The chain runs to 88 residues: Sec-independent protein translocase protein TatA (88 aa).

Residues 1–21 (MGGISIWQLLIIAVIVVLLFG) form a helical membrane-spanning segment. The segment at 41-88 (KAMGDENQKETNNAEKTTNDADFDTKNLAQKTSTEEKSTTESKNKEQV) is disordered. Basic and acidic residues-rich tracts occupy residues 42–65 (AMGD…DFDT) and 73–88 (STEE…KEQV).

Belongs to the TatA/E family. The Tat system comprises two distinct complexes: a TatABC complex, containing multiple copies of TatA, TatB and TatC subunits, and a separate TatA complex, containing only TatA subunits. Substrates initially bind to the TatABC complex, which probably triggers association of the separate TatA complex to form the active translocon.

It localises to the cell inner membrane. Its function is as follows. Part of the twin-arginine translocation (Tat) system that transports large folded proteins containing a characteristic twin-arginine motif in their signal peptide across membranes. TatA could form the protein-conducting channel of the Tat system. The protein is Sec-independent protein translocase protein TatA of Proteus mirabilis (strain HI4320).